Reading from the N-terminus, the 103-residue chain is c-Myc-binding protein (103 aa).

The protein belongs to the AMY1 family. In terms of assembly, binds via its C-terminal region to the N-terminal region of MYC. Associates with AKAP1/S-AKAP84. Interacts with MYCBPAP. Interacts with CFAP91.

It localises to the cytoplasm. It is found in the nucleus. Functionally, may control the transcriptional activity of MYC. Stimulates the activation of E box-dependent transcription by MYC. The sequence is that of c-Myc-binding protein (Mycbp) from Mus musculus (Mouse).